The sequence spans 448 residues: Phosphoglucosamine mutase (448 aa).

The active-site Phosphoserine intermediate is Ser-100. Mg(2+) is bound by residues Ser-100, Asp-240, Asp-242, and Asp-244. The residue at position 100 (Ser-100) is a Phosphoserine.

The protein belongs to the phosphohexose mutase family. It depends on Mg(2+) as a cofactor. Activated by phosphorylation.

It catalyses the reaction alpha-D-glucosamine 1-phosphate = D-glucosamine 6-phosphate. Functionally, catalyzes the conversion of glucosamine-6-phosphate to glucosamine-1-phosphate. This Bacillus cereus (strain B4264) protein is Phosphoglucosamine mutase.